A 448-amino-acid polypeptide reads, in one-letter code: Adenylosuccinate synthetase (448 aa).

Residues 22-28 (GDEGKGK) and 50-52 (GHT) contribute to the GTP site. The Proton acceptor role is filled by aspartate 23. Positions 23 and 50 each coordinate Mg(2+). IMP-binding positions include 23–26 (DEGK), 48–51 (NAGH), threonine 139, arginine 153, glutamine 234, threonine 249, and arginine 321. The active-site Proton donor is the histidine 51. Substrate is bound at residue 317 to 323 (SVTGRPR). GTP-binding positions include arginine 323, 349–351 (KLD), and 431–433 (STG).

The protein belongs to the adenylosuccinate synthetase family. Homodimer. Requires Mg(2+) as cofactor.

Its subcellular location is the cytoplasm. The enzyme catalyses IMP + L-aspartate + GTP = N(6)-(1,2-dicarboxyethyl)-AMP + GDP + phosphate + 2 H(+). It participates in purine metabolism; AMP biosynthesis via de novo pathway; AMP from IMP: step 1/2. Its function is as follows. Plays an important role in the de novo pathway of purine nucleotide biosynthesis. Catalyzes the first committed step in the biosynthesis of AMP from IMP. This chain is Adenylosuccinate synthetase, found in Paraburkholderia phytofirmans (strain DSM 17436 / LMG 22146 / PsJN) (Burkholderia phytofirmans).